Consider the following 262-residue polypeptide: uncharacterized protein (262 aa).

6 helical membrane passes run 21-41 (ILIT…VGKF), 94-114 (IVSN…LAYL), 139-159 (LLIL…GVNL), 164-184 (LIAV…AVVV), 205-225 (IVIL…LEPI), and 240-260 (LLAA…SMLF).

The protein resides in the cell membrane. This is an uncharacterized protein from Methanocaldococcus jannaschii (strain ATCC 43067 / DSM 2661 / JAL-1 / JCM 10045 / NBRC 100440) (Methanococcus jannaschii).